Here is a 283-residue protein sequence, read N- to C-terminus: Polyamine aminopropyltransferase (283 aa).

The 234-residue stretch at 5-238 (TTWIDEYHKG…GIWSWTFASS (234 aa)) folds into the PABS domain. Gln-32 serves as a coordination point for S-methyl-5'-thioadenosine. Spermidine is bound by residues His-63 and Asp-87. Residues Glu-107 and 139–140 (DG) each bind S-methyl-5'-thioadenosine. Asp-158 acts as the Proton acceptor in catalysis. 158–161 (DCSD) contributes to the spermidine binding site.

This sequence belongs to the spermidine/spermine synthase family. Homodimer or homotetramer.

It localises to the cytoplasm. It catalyses the reaction S-adenosyl 3-(methylsulfanyl)propylamine + putrescine = S-methyl-5'-thioadenosine + spermidine + H(+). It participates in amine and polyamine biosynthesis; spermidine biosynthesis; spermidine from putrescine: step 1/1. Its function is as follows. Catalyzes the irreversible transfer of a propylamine group from the amino donor S-adenosylmethioninamine (decarboxy-AdoMet) to putrescine (1,4-diaminobutane) to yield spermidine. The sequence is that of Polyamine aminopropyltransferase from Prochlorococcus marinus (strain AS9601).